Here is a 429-residue protein sequence, read N- to C-terminus: uncharacterized protein (429 aa).

Active-site charge relay system residues include S116, D179, and H206.

It belongs to the AB hydrolase 3 family.

It localises to the cytoplasm. The protein localises to the nucleus. This is an uncharacterized protein from Schizosaccharomyces pombe (strain 972 / ATCC 24843) (Fission yeast).